The primary structure comprises 279 residues: Lacto-N-neotetraose biosynthesis glycosyltransferase LgtB (279 aa).

The protein belongs to the glycosyltransferase 25 family.

Its pathway is glycan metabolism; lacto-N-neotetraose biosynthesis. It participates in bacterial outer membrane biogenesis; lipooligosaccharide biosynthesis. In terms of biological role, adds the second galactose to the lacto-N-tetraose chain in lipooligosaccharide (LOS). The polypeptide is Lacto-N-neotetraose biosynthesis glycosyltransferase LgtB (lgtB) (Neisseria meningitidis serogroup A / serotype 4A (strain DSM 15465 / Z2491)).